The primary structure comprises 355 residues: 3'-5' exonuclease (355 aa).

The segment at 1-119 (MDKFLIKMPI…TPSPEKVKPE (119 aa)) is disordered. Composition is skewed to basic and acidic residues over residues 13 to 29 (KNNETPEQKPIVKKETP) and 71 to 91 (KNLDTLEVNTEKNTAESENPP). Phosphoserine occurs at positions 104 and 112. In terms of domain architecture, 3'-5' exonuclease spans 154–315 (TDVDVVPMAF…GQVIYRDLEQ (162 aa)). Aspartate 164, glutamate 166, and aspartate 302 together coordinate Mg(2+).

Belongs to the WRNexo family.

It localises to the nucleus. In terms of biological role, has exonuclease activity on both single-stranded and duplex templates bearing overhangs, but not blunt ended duplex DNA, and cleaves in a 3'-5' direction. Essential for the formation of DNA replication focal centers. Has an important role in maintaining genome stability. The chain is 3'-5' exonuclease from Drosophila persimilis (Fruit fly).